The primary structure comprises 125 residues: Holo-[acyl-carrier-protein] synthase (125 aa).

2 residues coordinate Mg(2+): E9 and Q58.

It belongs to the P-Pant transferase superfamily. AcpS family. It depends on Mg(2+) as a cofactor.

Its subcellular location is the cytoplasm. The enzyme catalyses apo-[ACP] + CoA = holo-[ACP] + adenosine 3',5'-bisphosphate + H(+). Functionally, transfers the 4'-phosphopantetheine moiety from coenzyme A to a Ser of acyl-carrier-protein. The polypeptide is Holo-[acyl-carrier-protein] synthase (Rhodopirellula baltica (strain DSM 10527 / NCIMB 13988 / SH1)).